A 252-amino-acid polypeptide reads, in one-letter code: 2-succinyl-6-hydroxy-2,4-cyclohexadiene-1-carboxylate synthase (252 aa).

The protein belongs to the AB hydrolase superfamily. MenH family. Monomer.

The catalysed reaction is 5-enolpyruvoyl-6-hydroxy-2-succinyl-cyclohex-3-ene-1-carboxylate = (1R,6R)-6-hydroxy-2-succinyl-cyclohexa-2,4-diene-1-carboxylate + pyruvate. It functions in the pathway quinol/quinone metabolism; 1,4-dihydroxy-2-naphthoate biosynthesis; 1,4-dihydroxy-2-naphthoate from chorismate: step 3/7. Its pathway is quinol/quinone metabolism; menaquinone biosynthesis. In terms of biological role, catalyzes a proton abstraction reaction that results in 2,5-elimination of pyruvate from 2-succinyl-5-enolpyruvyl-6-hydroxy-3-cyclohexene-1-carboxylate (SEPHCHC) and the formation of 2-succinyl-6-hydroxy-2,4-cyclohexadiene-1-carboxylate (SHCHC). The sequence is that of 2-succinyl-6-hydroxy-2,4-cyclohexadiene-1-carboxylate synthase from Salmonella paratyphi B (strain ATCC BAA-1250 / SPB7).